Here is a 213-residue protein sequence, read N- to C-terminus: V-type ATP synthase subunit D (213 aa).

This sequence belongs to the V-ATPase D subunit family.

Produces ATP from ADP in the presence of a proton gradient across the membrane. The polypeptide is V-type ATP synthase subunit D (Clostridium botulinum (strain Alaska E43 / Type E3)).